An 873-amino-acid chain; its full sequence is Leucine--tRNA ligase (873 aa).

The 'HIGH' region signature appears at 43-53 (PYPSGSLHMGH). The 'KMSKS' region signature appears at 624–628 (TMSKS). ATP is bound at residue Lys627.

The protein belongs to the class-I aminoacyl-tRNA synthetase family.

Its subcellular location is the cytoplasm. The enzyme catalyses tRNA(Leu) + L-leucine + ATP = L-leucyl-tRNA(Leu) + AMP + diphosphate. This chain is Leucine--tRNA ligase, found in Synechococcus sp. (strain JA-3-3Ab) (Cyanobacteria bacterium Yellowstone A-Prime).